The chain runs to 279 residues: MPEILEVVDVDGGPYGVTVDETGTLWFTLAARGAVGRLVDGTVETVALEPADGSPTVIMAEGDGAWFTEFRGNRIGRVEANGALSFLTAESPYGLCRAGDGGLWYTELSAGGVVHRAPDGTTTRHAVEGMPSMIAEAADGTVFVTLNQGNAVARITPDGQVRTTALPTAGAGPVGLATAADGAWFVELLAGQLGHVDRDGTVTEHPLPDRDARPHAVVVAPDGTVWFTEWAAARLGRRTADGEITELALPGAEPHGLAVAPDGTLWVAMESGALVHVRP.

Position 215 (histidine 215) interacts with substrate. Glutamate 253 serves as a coordination point for Mg(2+). Histidine 255 serves as the catalytic Proton acceptor. Residue glutamate 270 participates in Mg(2+) binding.

It belongs to the Vgb family. As to quaternary structure, monomer. Mg(2+) serves as cofactor.

Its function is as follows. Inactivates the type B streptogramin antibiotics by linearizing the lactone ring at the ester linkage, generating a free phenylglycine carboxylate and converting the threonyl moiety into 2-amino-butenoic acid. In Nocardia farcinica (strain IFM 10152), this protein is Virginiamycin B lyase.